Here is a 179-residue protein sequence, read N- to C-terminus: Large ribosomal subunit protein uL6 (179 aa).

The protein belongs to the universal ribosomal protein uL6 family. In terms of assembly, part of the 50S ribosomal subunit.

Functionally, this protein binds to the 23S rRNA, and is important in its secondary structure. It is located near the subunit interface in the base of the L7/L12 stalk, and near the tRNA binding site of the peptidyltransferase center. This is Large ribosomal subunit protein uL6 from Trichodesmium erythraeum (strain IMS101).